A 69-amino-acid polypeptide reads, in one-letter code: Large ribosomal subunit protein uL29 (69 aa).

The protein belongs to the universal ribosomal protein uL29 family.

This is Large ribosomal subunit protein uL29 from Clostridium perfringens (strain ATCC 13124 / DSM 756 / JCM 1290 / NCIMB 6125 / NCTC 8237 / Type A).